Reading from the N-terminus, the 511-residue chain is Neuronal acetylcholine receptor subunit alpha-2 (511 aa).

A signal peptide spans 1-27; that stretch reads MTLSHSALQFWTHLYLWCLLLVPAVLT. At 28–241 the chain is on the extracellular side; that stretch reads QQGSHTHAED…VTYYFVIRRL (214 aa). N56 and N106 each carry an N-linked (GlcNAc...) asparagine glycan. C160 and C174 form a disulfide bridge. N212 carries N-linked (GlcNAc...) asparagine glycosylation. C224 and C225 are joined by a disulfide. Helical transmembrane passes span 242 to 266, 274 to 292, and 308 to 329; these read PLFYTINLIIPCLLISCLTVLVFYL, ITLCISVLLSLTVFLLLIT, and YLLFTMIFVTLSIVITVFVLNV. The Cytoplasmic portion of the chain corresponds to 330-484; it reads HHRSPSTHNM…WKYVAMVVDR (155 aa). The helical transmembrane segment at 485 to 503 threads the bilayer; that stretch reads IFLWLFIIVCFLGTIGLFL.

The protein belongs to the ligand-gated ion channel (TC 1.A.9) family. Acetylcholine receptor (TC 1.A.9.1) subfamily. Alpha-2/CHRNA2 sub-subfamily. As to quaternary structure, neuronal AChR seems to be composed of two different types of subunits: alpha and non-alpha (beta). CHRNA2/Alpha-2 subunit can be combined to CHRNB2/beta-2 or CHRNB4/beta-4 to give rise to functional receptors. The alpha-2:beta-2 nAChR complex is proposed to be a heteropentamer with two subtypes: LS (low agonist sensitivity) with a (alpha-2)3:(beta-2)2 and HS (high agonist sensitivity) with a (alpha-2)2:(beta-2)3 stoichiometry; the subtypes differ in their subunit binding interfaces which are involved in ligand binding.

Its subcellular location is the synaptic cell membrane. It is found in the cell membrane. The enzyme catalyses Ca(2+)(in) = Ca(2+)(out). It carries out the reaction K(+)(in) = K(+)(out). The catalysed reaction is Na(+)(in) = Na(+)(out). Its function is as follows. Component of neuronal acetylcholine receptors (nAChRs) that function as pentameric, ligand-gated cation channels with high calcium permeability among other activities. nAChRs are excitatory neurotrasnmitter receptors formed by a collection of nAChR subunits known to mediate synaptic transmission in the nervous system and the neuromuscular junction. Each nAchR subunit confers differential attributes to channel properties, including activation, deactivation and desensitization kinetics, pH sensitivity, cation permeability, and binding to allosteric modulators. CHRNA2 forms heteropentameric neuronal acetylcholine receptors with CHRNB2 and CHRNB4 and plays a role in nicotine dependence. This Rattus norvegicus (Rat) protein is Neuronal acetylcholine receptor subunit alpha-2 (Chrna2).